Consider the following 366-residue polypeptide: D-alanine--D-alanine ligase (366 aa).

Positions 146–352 (KICFEHAGLQ…YTELINRLIE (207 aa)) constitute an ATP-grasp domain. An ATP-binding site is contributed by 179–234 (EKKLRYPMFVKPANMGSSVGISKAHNRNELIEAIELALAYDRKFLIEKAINAREME). Residues aspartate 305, glutamate 319, and asparagine 321 each coordinate Mg(2+).

Belongs to the D-alanine--D-alanine ligase family. The cofactor is Mg(2+). It depends on Mn(2+) as a cofactor.

It is found in the cytoplasm. It carries out the reaction 2 D-alanine + ATP = D-alanyl-D-alanine + ADP + phosphate + H(+). The protein operates within cell wall biogenesis; peptidoglycan biosynthesis. In terms of biological role, cell wall formation. The protein is D-alanine--D-alanine ligase of Chloroherpeton thalassium (strain ATCC 35110 / GB-78).